The primary structure comprises 405 residues: Nuclear RNA export factor 2 (405 aa).

The segment at 1–33 (MRGQNRRGYRNIEGRLSLSSHSSHSSPRQTHVT) is disordered. A compositionally biased stretch (low complexity) spans 16 to 26 (LSLSSHSSHSS). Residues 26-94 (SPRQTHVTNL…SVVLQHIGYK (69 aa)) form the RRM domain. LRR repeat units follow at residues 97–118 (RISG…SSLS) and 123–144 (FLKF…KKLG). An NTF2 domain is found at 215–382 (LVEEFIITYY…VAIVSDQLFI (168 aa)).

It belongs to the NXF family.

The protein localises to the nucleus. Its function is as follows. Involved in the export of cellular mRNA to the cytoplasm. Plays a role in the nuclear retention of unspliced mRNAs. The sequence is that of Nuclear RNA export factor 2 from Caenorhabditis elegans.